The following is a 259-amino-acid chain: DNA repair protein RecO (259 aa).

This sequence belongs to the RecO family.

Its function is as follows. Involved in DNA repair and RecF pathway recombination. The sequence is that of DNA repair protein RecO from Syntrophus aciditrophicus (strain SB).